Consider the following 307-residue polypeptide: MALVRKRRQINLRLPVPPLSVHLPWFSFASSTAPVINNGISASDVEKLHVLGRGSSGIVYKVHHKTTGEIYALKSVNGDMSPAFTRQLAREMEILRRTDSPYVVRCQGIFEKPIVGEVSILMEYMDGGNLESLRGAVTEKQLAGFSRQILKGLSYLHSLKIVHRDIKPANLLLNSRNEVKIADFGVSKIITRSLDYCNSYVGTCAYMSPERFDSAAGENSDVYAGDIWSFGVMILELFVGHFPLLPQGQRPDWATLMCVVCFGEPPRAPEGCSDEFRSFVDCCLRKESSERWTASQLLGHPFLRESL.

One can recognise a Protein kinase domain in the interval 45-303; sequence VEKLHVLGRG…ASQLLGHPFL (259 aa). ATP-binding positions include 51–59 and Lys-74; that span reads LGRGSSGIV. The active-site Proton acceptor is Asp-165. Ser-193 and Ser-199 each carry phosphoserine. A Phosphothreonine modification is found at Thr-203.

The protein belongs to the protein kinase superfamily. STE Ser/Thr protein kinase family. MAP kinase kinase subfamily. As to quaternary structure, interacts with MPK15. In terms of processing, phosphorylation at Ser-193 and Ser-199 by MAP kinase kinase kinases positively regulates kinase activity. Expressed in all tissues, with a relatively higher level in leaves and lower level in roots and flowers.

It catalyses the reaction L-seryl-[protein] + ATP = O-phospho-L-seryl-[protein] + ADP + H(+). The enzyme catalyses L-threonyl-[protein] + ATP = O-phospho-L-threonyl-[protein] + ADP + H(+). The catalysed reaction is L-tyrosyl-[protein] + ATP = O-phospho-L-tyrosyl-[protein] + ADP + H(+). Its function is as follows. May function as a negative regulator of polar auxin transport. Positively regulates plant basal and systemic acquired resistance (SAR). Activates MPK3 and MPK6 in vitro. In Arabidopsis thaliana (Mouse-ear cress), this protein is Mitogen-activated protein kinase kinase 7 (MKK7).